Reading from the N-terminus, the 4303-residue chain is Polycystin-1 (4303 aa).

An N-terminal signal peptide occupies residues 1-23 (MPPAAPARLALALGLGLWLGALA). Positions 24 to 67 (GGPGRGCGPCEPPCLCGPAPGAACRVNCSGRGLRTLGPALRIPA) constitute an LRRNT domain. Over 24–3074 (GGPGRGCGPC…VFPEPTADVN (3051 aa)) the chain is Extracellular. 2 N-linked (GlcNAc...) asparagine glycosylation sites follow: Asn-50 and Asn-89. LRR repeat units follow at residues 68 to 91 (DATALDVSHNLLRALDVGLLANLS) and 92 to 113 (ALAELDISNNKISTLEEGIFAN). 2 N-linked (GlcNAc...) asparagine glycosylation sites follow: Asn-116 and Asn-121. Residues 125–178 (NPFECDCGLAWLPRWAEEQQVRVVQPEAATCAGPGSLAGQPLLGIPLLDSGCGE) enclose the LRRCT domain. The WSC domain maps to 177–271 (GEEYVACLPD…PTLLQHVFPA (95 aa)). N-linked (GlcNAc...) asparagine glycosylation is present at Asn-187. The 88-residue stretch at 272-359 (SPGATLVGPH…VQVEAAPAAL (88 aa)) folds into the PKD 1 domain. Residues 415 to 531 (GNGHCYRLVV…CSAPHSYVCE (117 aa)) enclose the C-type lectin domain. 2 disulfide bridges follow: Cys-436–Cys-530 and Cys-508–Cys-522. A disordered region spans residues 616 to 635 (AGTPENGSEPESRSPDNRTQ). N-linked (GlcNAc...) asparagine glycans are attached at residues Asn-621 and Asn-632. An LDL-receptor class A; atypical domain is found at 638-671 (PACMPGGRWCPGANICLPLDASCHPQACANGCTS). Cystine bridges form between Cys-640–Cys-653, Cys-647–Cys-665, and Cys-660–Cys-669. One can recognise a PKD 2 domain in the interval 743-817 (LSANASSWLP…RHNLSCSFDV (75 aa)). N-linked (GlcNAc...) asparagine glycans are attached at residues Asn-746, Asn-810, Asn-841, Asn-854, Asn-890, Asn-921, Asn-1004, Asn-1010, Asn-1034, Asn-1072, Asn-1113, Asn-1178, Asn-1194, Asn-1240, Asn-1269, Asn-1336, Asn-1348, Asn-1382, Asn-1450, Asn-1455, Asn-1474, Asn-1518, Asn-1541, Asn-1554, Asn-1563, Asn-1647, Asn-1661, Asn-1733, Asn-1791, Asn-1834, Asn-1867, and Asn-1880. 15 PKD domains span residues 855–928 (ATAT…RVTA), 935–1020 (LRAT…NRMQ), 1023–1129 (QVST…LPSV), 1127–1215 (PSVA…LRGL), 1213–1298 (RGLS…EVLR), 1294–1383 (LEVL…VGNV), 1382–1469 (NVTL…VLVT), 1468–1551 (VTSI…VRGL), 1550–1635 (GLVV…IEGL), 1634–1721 (GLQV…VGWL), 1719–1805 (GWLM…VSGL), 1807–1890 (IRAS…IVGL), 1889–1974 (GLVL…VSGL), 1977–2057 (PNCC…VLEV), and 2060–2148 (AVQY…ACRE). Residues Asn-1991, Asn-2050, Asn-2074, Asn-2125, Asn-2248, Asn-2353, Asn-2395, Asn-2412, Asn-2567, Asn-2578, Asn-2645, Asn-2718, Asn-2754, Asn-2841, Asn-2878, Asn-2925, Asn-2956, and Asn-2994 are each glycosylated (N-linked (GlcNAc...) asparagine). One can recognise an REJ domain in the interval 2146–2833 (CREPEVDVVL…QLIFLVDSNP (688 aa)). A GAIN-B domain is found at 2862-3063 (PIERLASERA…SLFVPPSHVR (202 aa)). Cys-3015 and Cys-3043 are disulfide-bonded. The tract at residues 3015–3063 (CQYFSEEDMVWRTEGLLPLEETSPRQAVCLTRHLTAFGASLFVPPSHVR) is GPS. Residues 3075-3095 (YIVMLTCAVCLVTYMVMAAIL) form a helical membrane-spanning segment. Topologically, residues 3096–3277 (HKLDQLDASR…DRPPRSRFTR (182 aa)) are cytoplasmic. The 116-residue stretch at 3118–3233 (FKYEILVKTG…EANGGLVEKE (116 aa)) folds into the PLAT domain. The helical transmembrane segment at 3278–3298 (IQRATCCVLLICLFLGANAVW) threads the bilayer. The Extracellular segment spans residues 3299 to 3323 (YGAVGDSAYSTGHVSRLSPLSVDTV). The helical transmembrane segment at 3324-3344 (AVGLVSSVVVYPVYLAILFLF) threads the bilayer. At 3345-3559 (RMSRSKVAGS…LPAWCASLAH (215 aa)) the chain is on the cytoplasmic side. Residues 3560-3580 (GLSLLLVAVAVAVSGWVGASF) form a helical membrane-spanning segment. Over 3581-3582 (PP) the chain is Extracellular. Residues 3583 to 3603 (GVSVAWLLSSSASFLASFLGW) traverse the membrane as a helical segment. Residues 3604-3665 (EPLKVLLEAL…LAKEEARKVK (62 aa)) lie on the Cytoplasmic side of the membrane. A helical membrane pass occupies residues 3666-3686 (RLHGMLRSLLVYMLFLLVTLL). Residues 3687–3901 (ASYGDASCHG…RLSAGLSLPL (215 aa)) are Extracellular-facing. N-linked (GlcNAc...) asparagine glycans are attached at residues Asn-3738, Asn-3790, and Asn-3845. The helical transmembrane segment at 3902–3922 (LTSVCLLLFAVHFAVAEARTW) threads the bilayer. Over 3923–3935 (HREGRWRVLRLGA) the chain is Cytoplasmic. A helical transmembrane segment spans residues 3936–3956 (WARWLLVALTAATALVRLAQL). Residues 3957–3984 (GAADRQWTRFVRGRPRRFTSFDQVAQLS) lie on the Extracellular side of the membrane. The helical transmembrane segment at 3985–4005 (SAARGLAASLLFLLLVKAAQQ) threads the bilayer. Residues 4006 to 4027 (LRFVRQWSVFGKTLCRALPELL) are Cytoplasmic-facing. A helical transmembrane segment spans residues 4028-4048 (GVTLGLVVLGVAYAQLAILLV). Topologically, residues 4049–4090 (SSCVDSLWSVAQALLVLCPGTGLSTLCPAESWHLSPLLCVGL) are extracellular. A helical membrane pass occupies residues 4091-4110 (WALRLWGALRLGAVILRWRY). Over 4111 to 4303 (HALRGELYRP…AKNKVHPSST (193 aa)) the chain is Cytoplasmic. Disordered regions lie at residues 4160–4196 (PLPSRSSRGSKVSPDVPPPSAGSDASHPSTSSSQLDG) and 4243–4303 (LHSL…PSST). Ser-4166 carries the phosphoserine; by PRKX; in vitro modification. A compositionally biased stretch (polar residues) spans 4185–4195 (SHPSTSSSQLD). Residues 4220–4251 (EALLTQFDRLNQATEDVYQLEQQLHSLQGRRS) adopt a coiled-coil conformation. Positions 4253 to 4269 (RAPAGSSRGPSPGLRPA) are enriched in low complexity. The span at 4292-4303 (LRAKNKVHPSST) shows a compositional bias: basic residues.

It belongs to the polycystin family. As to quaternary structure, component of the heterotetrameric polycystin channel complex with PKD2; the tetramer contains one PKD1 chain and three PKD2 chains. Interacts with PKD2; the interaction is required for ciliary localization. Interacts with PKD2L1. Interacts with PRKX; involved in differentiation and controlled morphogenesis of the kidney. Interacts (via extracellular domain) with WNT3A, WNT4, WNT5A and WNT9B. Interacts with DVL1 and DVL2. Interacts with NPHP1 (via SH3 domain). Interacts with BBS1, BBS4, BBS5 and TTC8. Interacts with RGS7. Interacts (via the PKD repeats in the N-terminal extracellular region) with EPCIP; the interaction is not dependent on N-glycosylation of either protein. N-glycosylated. Post-translationally, after synthesis, undergoes cleavage between Leu-3048 and Thr-3049 in the GPS region of the GAIN-B domain. Cleavage at the GPS region occurs through a cis-autoproteolytic mechanism involving an ester-intermediate via N-O acyl rearrangement. This process takes place in the early secretory pathway, depends on initial N-glycosylation, and requires the REJ domain. There is evidence that cleavage at GPS region is incomplete. Uncleaved and cleaved products may have different functions in vivo.

It is found in the cell membrane. Its subcellular location is the cell projection. The protein resides in the cilium. It localises to the endoplasmic reticulum. The protein localises to the golgi apparatus. It is found in the vesicle. Its subcellular location is the secreted. The protein resides in the extracellular exosome. In terms of biological role, component of a heteromeric calcium-permeable ion channel formed by PKD1 and PKD2 that is activated by interaction between PKD1 and a Wnt family member, such as WNT3A and WNT9B. Both PKD1 and PKD2 are required for channel activity. Involved in renal tubulogenesis. Involved in fluid-flow mechanosensation by the primary cilium in renal epithelium. Acts as a regulator of cilium length, together with PKD2. The dynamic control of cilium length is essential in the regulation of mechanotransductive signaling. The cilium length response creates a negative feedback loop whereby fluid shear-mediated deflection of the primary cilium, which decreases intracellular cAMP, leads to cilium shortening and thus decreases flow-induced signaling. May be an ion-channel regulator. Involved in adhesive protein-protein and protein-carbohydrate interactions. Likely to be involved with polycystin-1-interacting protein 1 in the detection, sequestration and exocytosis of senescent mitochondria. In Homo sapiens (Human), this protein is Polycystin-1.